The following is a 441-amino-acid chain: Probable xylan O-acetyltransferase 10 (441 aa).

At 1-19 (MMKPQHGGMAGHGGGRTRS) the chain is on the cytoplasmic side. A helical; Signal-anchor for type II membrane protein membrane pass occupies residues 20–40 (PFLTSYALTLAFITFVSVLYF). Residues 41 to 441 (KDFSSTLHQP…ELLYSKLFFP (401 aa)) lie on the Lumenal side of the membrane. The tract at residues 50–81 (PFLTRPPPHRRQIARPRAPSHHHGGGSSSGGG) is disordered. Positions 56 to 73 (PPHRRQIARPRAPSHHHG) are enriched in basic residues. Cystine bridges form between Cys97/Cys148, Cys119/Cys184, Cys128/Cys422, and Cys341/Cys418. Asn154 is a glycosylation site (N-linked (GlcNAc...) asparagine). The short motif at 171-173 (GDS) is the GDS motif element. The Nucleophile role is filled by Ser173. 3 N-linked (GlcNAc...) asparagine glycosylation sites follow: Asn212, Asn343, and Asn381. Residue Asp417 is the Proton donor of the active site. A DXXH motif motif is present at residues 417-420 (DCTH). The active-site Proton acceptor is His420.

It belongs to the PC-esterase family. TBL subfamily. Expressed in roots, leaves and stems.

The protein resides in the golgi apparatus membrane. Probable xylan acetyltransferase required for 2-O- and 3-O-monoacetylation of xylosyl residues in xylan. Possesses extremely low activity in vitro. The protein is Probable xylan O-acetyltransferase 10 of Oryza sativa subsp. japonica (Rice).